A 594-amino-acid polypeptide reads, in one-letter code: Developmental and secondary metabolism regulator veA (594 aa).

One can recognise a Velvet domain in the interval 24 to 220 (GRRLFYRIDV…AEQGTRVRIR (197 aa)). A Nuclear localization signal motif is present at residues 38–43 (EKCRAC). Disordered regions lie at residues 40–59 (CRAC…VDPP) and 210–558 (MAEQ…DVEE). Residues 217–229 (VRIRRDVRMRRRD) are compositionally biased toward basic residues. Pro residues predominate over residues 296–307 (APPPPNPPPPGF). Over residues 327 to 351 (SHSQYQQPTSSSSSSEQVSSVPQSP) the composition is skewed to low complexity. The span at 352 to 362 (AYSSHAAQQHY) shows a compositional bias: polar residues. Residues 374 to 383 (PERRLSDHRS) are compositionally biased toward basic and acidic residues. Positions 384 to 403 (SQPNNHPQQSPHQHSYSHRS) are enriched in low complexity. The span at 405–416 (PQRERFMPDSRR) shows a compositional bias: basic and acidic residues. Positions 457 to 506 (VADTQATPHLPPIRWPRPNMNLPSPPSEHQEALQPLQPAPLHYESQTHQQ) are PEST. Residues 523-538 (YSYGYSYSHNHSHGYG) show a composition bias toward low complexity.

This sequence belongs to the velvet family. VeA subfamily. In terms of assembly, component of the heterotrimeric velvet complex composed of LAEA, VEA and VELB; VEA acting as a bridging protein between LAEA and VELB.

It is found in the nucleus. It localises to the cytoplasm. Component of the velvet transcription factor complex that controls sexual/asexual developmental ratio in response to light, promoting sexual development in the darkness while stimulating asexual sporulation under illumination. The velvet complex acts as a global regulator for secondary metabolite gene expression. Regulates of the response to reactive oxygen species (ROS) stress. This chain is Developmental and secondary metabolism regulator veA, found in Pyricularia oryzae (strain 70-15 / ATCC MYA-4617 / FGSC 8958) (Rice blast fungus).